Here is a 90-residue protein sequence, read N- to C-terminus: Phosphocarrier protein NPr (90 aa).

The HPr domain occupies threonine 2–aspartate 90. The active-site Pros-phosphohistidine intermediate is the histidine 16.

Belongs to the HPr family.

It is found in the cytoplasm. Component of the phosphoenolpyruvate-dependent nitrogen-metabolic phosphotransferase system (nitrogen-metabolic PTS), that seems to be involved in regulating nitrogen metabolism. The phosphoryl group from phosphoenolpyruvate (PEP) is transferred to the phosphoryl carrier protein NPr by enzyme I-Ntr. Phospho-NPr then transfers it to EIIA-Ntr. Could function in the transcriptional regulation of sigma-54 dependent operons in conjunction with the NPr (PtsO) and EIIA-Ntr (PtsN) proteins. This is Phosphocarrier protein NPr (ptsO) from Klebsiella oxytoca.